Consider the following 253-residue polypeptide: Triosephosphate isomerase (253 aa).

A substrate-binding site is contributed by 9–11 (NWK). The Electrophile role is filled by histidine 97. The active-site Proton acceptor is glutamate 169. Residues glycine 175, serine 215, and 236–237 (GG) contribute to the substrate site.

Belongs to the triosephosphate isomerase family. As to quaternary structure, homodimer.

The protein localises to the cytoplasm. The enzyme catalyses D-glyceraldehyde 3-phosphate = dihydroxyacetone phosphate. It functions in the pathway carbohydrate biosynthesis; gluconeogenesis. The protein operates within carbohydrate degradation; glycolysis; D-glyceraldehyde 3-phosphate from glycerone phosphate: step 1/1. Involved in the gluconeogenesis. Catalyzes stereospecifically the conversion of dihydroxyacetone phosphate (DHAP) to D-glyceraldehyde-3-phosphate (G3P). This chain is Triosephosphate isomerase, found in Staphylococcus epidermidis (strain ATCC 35984 / DSM 28319 / BCRC 17069 / CCUG 31568 / BM 3577 / RP62A).